A 141-amino-acid polypeptide reads, in one-letter code: Large ribosomal subunit protein uL14 (141 aa).

The protein belongs to the universal ribosomal protein uL14 family. In terms of assembly, part of the 50S ribosomal subunit. Forms a cluster with proteins L3 and L24e, part of which may contact the 16S rRNA in 2 intersubunit bridges.

Functionally, binds to 23S rRNA. Forms part of two intersubunit bridges in the 70S ribosome. The protein is Large ribosomal subunit protein uL14 of Thermofilum pendens (strain DSM 2475 / Hrk 5).